Consider the following 177-residue polypeptide: Chorismate pyruvate-lyase (177 aa).

The substrate site is built by methionine 36, arginine 78, leucine 116, and glutamate 157.

It belongs to the UbiC family. In terms of assembly, monomer.

The protein resides in the cytoplasm. It catalyses the reaction chorismate = 4-hydroxybenzoate + pyruvate. It participates in cofactor biosynthesis; ubiquinone biosynthesis. In terms of biological role, removes the pyruvyl group from chorismate, with concomitant aromatization of the ring, to provide 4-hydroxybenzoate (4HB) for the ubiquinone pathway. The protein is Chorismate pyruvate-lyase of Pectobacterium carotovorum subsp. carotovorum (strain PC1).